Reading from the N-terminus, the 225-residue chain is GTP-binding nuclear protein Ran (225 aa).

Residues 8–172 (VVAEFKLVLV…LWILRKLTGD (165 aa)) enclose the Small GTPase Ran-type domain. 19 to 26 (DGGVGKTT) is a GTP binding site. Residues 38–46 (KRYIATQGV) are switch-I. GTP-binding positions include Gly-69, 123-126 (NKVD), and 151-153 (SAK). The interval 69–85 (GQEKLGGLREGYYIGAN) is switch-II.

It belongs to the small GTPase superfamily. Ran family. Monomer. Found in a nuclear export complex with RanGTP, exportin and pre-miRNA.

The protein localises to the nucleus. In terms of biological role, GTP-binding protein involved in nucleocytoplasmic transport. Required for the import of protein into the nucleus and also for RNA export. Involved in chromatin condensation and control of cell cycle. In Tetrahymena thermophila, this protein is GTP-binding nuclear protein Ran.